A 293-amino-acid polypeptide reads, in one-letter code: Probable porphobilinogen deaminase (293 aa).

Cys-233 is modified (S-(dipyrrolylmethanemethyl)cysteine).

The protein belongs to the HMBS family. It depends on dipyrromethane as a cofactor.

The enzyme catalyses 4 porphobilinogen + H2O = hydroxymethylbilane + 4 NH4(+). Its pathway is porphyrin-containing compound metabolism; protoporphyrin-IX biosynthesis; coproporphyrinogen-III from 5-aminolevulinate: step 2/4. Functionally, tetrapolymerization of the monopyrrole PBG into the hydroxymethylbilane pre-uroporphyrinogen in several discrete steps. This is Probable porphobilinogen deaminase from Saccharolobus islandicus (strain Y.N.15.51 / Yellowstone #2) (Sulfolobus islandicus).